Consider the following 347-residue polypeptide: S-adenosylmethionine:tRNA ribosyltransferase-isomerase (347 aa).

It belongs to the QueA family. As to quaternary structure, monomer.

It is found in the cytoplasm. The enzyme catalyses 7-aminomethyl-7-carbaguanosine(34) in tRNA + S-adenosyl-L-methionine = epoxyqueuosine(34) in tRNA + adenine + L-methionine + 2 H(+). It participates in tRNA modification; tRNA-queuosine biosynthesis. Functionally, transfers and isomerizes the ribose moiety from AdoMet to the 7-aminomethyl group of 7-deazaguanine (preQ1-tRNA) to give epoxyqueuosine (oQ-tRNA). This is S-adenosylmethionine:tRNA ribosyltransferase-isomerase from Bordetella pertussis (strain Tohama I / ATCC BAA-589 / NCTC 13251).